The sequence spans 102 residues: Large ribosomal subunit protein uL24 (102 aa).

It belongs to the universal ribosomal protein uL24 family. As to quaternary structure, part of the 50S ribosomal subunit.

Its function is as follows. One of two assembly initiator proteins, it binds directly to the 5'-end of the 23S rRNA, where it nucleates assembly of the 50S subunit. In terms of biological role, one of the proteins that surrounds the polypeptide exit tunnel on the outside of the subunit. This chain is Large ribosomal subunit protein uL24, found in Herpetosiphon aurantiacus (strain ATCC 23779 / DSM 785 / 114-95).